The following is a 413-amino-acid chain: NPL4-like protein 2 (413 aa).

At Ser104 the chain carries Phosphoserine. An MPN domain is found at 131–272 (SVSFDRDAAN…ADVHFEAFQM (142 aa)).

The protein belongs to the NPL4 family.

It functions in the pathway protein degradation; proteasomal ubiquitin-dependent pathway. In terms of biological role, may be part of a complex that binds ubiquitinated proteins and that is necessary for the export of misfolded proteins from the ER to the cytoplasm, where they are degraded by the proteasome. The chain is NPL4-like protein 2 from Arabidopsis thaliana (Mouse-ear cress).